We begin with the raw amino-acid sequence, 76 residues long: Sea anemone sodium channel inhibitor type I (76 aa).

The first 19 residues, 1-19 (MNRMLIIFVVVTVFGLASG), serve as a signal peptide directing secretion. A propeptide spanning residues 20–30 (LGPNMPAPDLA) is cleaved from the precursor. Intrachain disulfides connect C37-C72, C39-C60, and C53-C73.

This sequence belongs to the sea anemone sodium channel inhibitory toxin family. Type I subfamily. As to expression, expressed in acontia, a specialised envenomation structure laden with batteries of venom-containing nematocysts found only in the superfamily Metridioidea.

The protein resides in the secreted. It is found in the nematocyst. May affect sodium channels (Nav). This is Sea anemone sodium channel inhibitor type I from Calliactis polypus (Hermit crab anemone).